A 96-amino-acid polypeptide reads, in one-letter code: Co-chaperonin GroES 2 (96 aa).

Belongs to the GroES chaperonin family. As to quaternary structure, heptamer of 7 subunits arranged in a ring. Interacts with the chaperonin GroEL.

It is found in the cytoplasm. Its function is as follows. Together with the chaperonin GroEL, plays an essential role in assisting protein folding. The GroEL-GroES system forms a nano-cage that allows encapsulation of the non-native substrate proteins and provides a physical environment optimized to promote and accelerate protein folding. GroES binds to the apical surface of the GroEL ring, thereby capping the opening of the GroEL channel. The protein is Co-chaperonin GroES 2 of Vibrio vulnificus (strain CMCP6).